The primary structure comprises 128 residues: Phosphoribosyl-AMP cyclohydrolase (128 aa).

Residue D89 coordinates Mg(2+). C90 is a binding site for Zn(2+). Mg(2+) contacts are provided by D91 and D93. The Zn(2+) site is built by C106 and C113.

This sequence belongs to the PRA-CH family. Homodimer. Requires Mg(2+) as cofactor. It depends on Zn(2+) as a cofactor.

It is found in the cytoplasm. The enzyme catalyses 1-(5-phospho-beta-D-ribosyl)-5'-AMP + H2O = 1-(5-phospho-beta-D-ribosyl)-5-[(5-phospho-beta-D-ribosylamino)methylideneamino]imidazole-4-carboxamide. It participates in amino-acid biosynthesis; L-histidine biosynthesis; L-histidine from 5-phospho-alpha-D-ribose 1-diphosphate: step 3/9. Functionally, catalyzes the hydrolysis of the adenine ring of phosphoribosyl-AMP. The chain is Phosphoribosyl-AMP cyclohydrolase from Pyrobaculum calidifontis (strain DSM 21063 / JCM 11548 / VA1).